The primary structure comprises 341 residues: MQYTAAQSQSVAIIGASGYVGVELTRLVQQHPALSLLGCYVSEHSSDAGSLLSDLHPQYAHLVKLSLQGLSSQKKELIKSSADTVFLCTDHGVSVELAPEFLAAGLKVIDLSGGFRLNATEDYPSFYGFEHQQDSWLQQAVYGLAEWYPQEIAAAQLVAVPGCYPTAALMALLPVKQAGLLSCNKIIINAVSGVTGAGRKAALTSHGAELSLQAYGLFEHRHTPEIAQQLQHEVLFTPHLAQFPRGILATVYAELNDDVSDADLDKAYQCYADQPLVRFEKQARPAIKNVVQQPFVDIGWHRQGNQLIAFSAIDNLLKGAASQAIQCVNLQLGLALEEGLL.

Cys-163 is an active-site residue.

It belongs to the NAGSA dehydrogenase family. Type 1 subfamily.

It is found in the cytoplasm. The catalysed reaction is N-acetyl-L-glutamate 5-semialdehyde + phosphate + NADP(+) = N-acetyl-L-glutamyl 5-phosphate + NADPH + H(+). The protein operates within amino-acid biosynthesis; L-arginine biosynthesis; N(2)-acetyl-L-ornithine from L-glutamate: step 3/4. In terms of biological role, catalyzes the NADPH-dependent reduction of N-acetyl-5-glutamyl phosphate to yield N-acetyl-L-glutamate 5-semialdehyde. The protein is N-acetyl-gamma-glutamyl-phosphate reductase of Idiomarina loihiensis (strain ATCC BAA-735 / DSM 15497 / L2-TR).